The following is a 275-amino-acid chain: 4-deoxy-L-threo-5-hexosulose-uronate ketol-isomerase (275 aa).

Zn(2+) is bound by residues histidine 193, histidine 195, glutamate 200, and histidine 242.

It belongs to the KduI family. Requires Zn(2+) as cofactor.

The catalysed reaction is 5-dehydro-4-deoxy-D-glucuronate = 3-deoxy-D-glycero-2,5-hexodiulosonate. It participates in glycan metabolism; pectin degradation; 2-dehydro-3-deoxy-D-gluconate from pectin: step 4/5. Catalyzes the isomerization of 5-dehydro-4-deoxy-D-glucuronate to 3-deoxy-D-glycero-2,5-hexodiulosonate. The sequence is that of 4-deoxy-L-threo-5-hexosulose-uronate ketol-isomerase from Bacillus licheniformis (strain ATCC 14580 / DSM 13 / JCM 2505 / CCUG 7422 / NBRC 12200 / NCIMB 9375 / NCTC 10341 / NRRL NRS-1264 / Gibson 46).